Consider the following 122-residue polypeptide: Beta-2-microglobulin (122 aa).

Positions methionine 1–alanine 23 are cleaved as a signal peptide. Positions proline 28–threonine 117 constitute an Ig-like C1-type domain. The cysteines at positions 48 and 103 are disulfide-linked.

This sequence belongs to the beta-2-microglobulin family. As to quaternary structure, heterodimer of an alpha chain and a beta chain. Beta-2-microglobulin is the beta-chain of major histocompatibility complex class I molecules.

The protein resides in the secreted. Component of the class I major histocompatibility complex (MHC). Involved in the presentation of peptide antigens to the immune system. In Acipenser baerii (Siberian sturgeon), this protein is Beta-2-microglobulin (b2m).